Here is a 175-residue protein sequence, read N- to C-terminus: Cytochrome c-550-like protein (175 aa).

The N-terminal stretch at 1 to 34 is a signal peptide; the sequence is MYQPHFWQRSIGWLCGGLLILLLGWTIAPATALA. 4 residues coordinate heme c: Cys-81, Cys-84, His-85, and Cys-135.

This sequence belongs to the cytochrome c family. PsbV subfamily. It depends on heme c as a cofactor.

Its subcellular location is the cellular thylakoid membrane. Functionally, probable low-potential cytochrome c, can partially replace cytochrome c-550 (PsbV) function. This chain is Cytochrome c-550-like protein, found in Thermosynechococcus vestitus (strain NIES-2133 / IAM M-273 / BP-1).